Reading from the N-terminus, the 896-residue chain is Probable sodium/sulfate cotransporter 3 (896 aa).

A run of 5 helical transmembrane segments spans residues 1–21 (MAAIGWPGIVAIISVAISFII), 47–69 (IITVAKAAAGYGNTGLLTVIFLY), 106–126 (VMVLSAFLNNTPCVTFMIPIL), 140–160 (LLIPLSYAAVLGGTCTSIGTS), and 186–206 (MFDIAPYGVPYALMGFVFIIL). 4 consecutive RCK C-terminal domains span residues 212–296 (LPGN…EFGL), 319–404 (TAFH…FKIN), 408–493 (LRFV…FPGL), and 499–586 (EQVD…KAFV). 7 consecutive transmembrane segments (helical) span residues 602–622 (MAIGVLLVVGMVLTQIVGGLK), 626–646 (YIHLWPAAVLTAALMLLTGCM), 654–674 (AIMWDVYLTIAAAFGVSAALE), 685–705 (AIISIGKSIGGDGPALIAIYV), 734–754 (LKIPAVDISVAIMLGASAGFI), 776–796 (FATIGAPFQIWLMVVASFILC), and 804–824 (VWIATWSITAFIVFVPALLTL). The disordered stretch occupies residues 857-881 (RAQSFGGKAMSVGSTESRTDGSSTP). Positions 868-881 (VGSTESRTDGSSTP) are enriched in polar residues.

Belongs to the divalent anion:Na+ symporter (DASS) superfamily. Na+/sulfate symporter (TC 2.A.47.4) family.

The protein localises to the cell membrane. In terms of biological role, na(+)/sulfate cotransporter with a probable low-affinity for sulfate. The protein is Probable sodium/sulfate cotransporter 3 (SLT3) of Chlamydomonas reinhardtii (Chlamydomonas smithii).